Reading from the N-terminus, the 252-residue chain is Transmembrane ascorbate-dependent reductase CYB561 (252 aa).

The residue at position 1 (methionine 1) is an N-acetylmethionine. The Cytoplasmic segment spans residues 1–17 (MEGPASPARAPGALPYY). The helical transmembrane segment at 18–38 (VAFSQLLGLIVVAMTGAWLGM) threads the bilayer. One can recognise a Cytochrome b561 domain in the interval 20–221 (FSQLLGLIVV…FATVILYILT (202 aa)). The Vesicular segment spans residues 39–52 (YRGGIAWESALQFN). Residues 53–73 (VHPLCMIIGLVFLQGDALLVY) traverse the membrane as a helical segment. 3 residues coordinate heme b: histidine 54, arginine 74, and lysine 81. The Cytoplasmic portion of the chain corresponds to 74–86 (RVFRNEAKRTTKV). L-ascorbate-binding residues include lysine 81 and lysine 85. A helical transmembrane segment spans residues 87-107 (LHGLLHVFAFVIALVGLVAVF). Heme b contacts are provided by residues histidine 88, 117–120 (DLYS), and histidine 122. The Vesicular segment spans residues 108-125 (EHHRKKGYADLYSLHSWC). The helical transmembrane segment at 126–146 (GILVFALFFAQWLVGFSFFLF) threads the bilayer. At 147 to 159 (PGASFSLRSRYRP) the chain is on the cytoplasmic side. Arginine 154 provides a ligand contact to L-ascorbate. The chain crosses the membrane as a helical span at residues 160 to 180 (QHVFFGAAIFLLSVATALLGL). Heme b contacts are provided by histidine 161 and glutamate 182. The Vesicular segment spans residues 181 to 199 (KEALLFELGTKYSMFEPEG). A helical transmembrane segment spans residues 200 to 220 (VLANVLGLLLATFATVILYIL). At 221-252 (TRADWKRPLQAEEQALSMDFKTLTEGDSPSSQ) the chain is on the cytoplasmic side. Residue lysine 226 participates in heme b binding. Phosphoserine occurs at positions 248 and 250.

The cofactor is heme b. As to expression, expressed in the adrenal medulla and all brain regions, but not in visceral organs.

It is found in the cytoplasmic vesicle. The protein resides in the secretory vesicle. Its subcellular location is the chromaffin granule membrane. It carries out the reaction monodehydro-L-ascorbate radical(out) + L-ascorbate(in) = monodehydro-L-ascorbate radical(in) + L-ascorbate(out). Functionally, transmembrane reductase that uses ascorbate as an electron donor in the cytoplasm and transfers electrons across membranes to reduce monodehydro-L-ascorbate radical in the lumen of secretory vesicles. It is therefore involved the regeneration and homeostasis within secretory vesicles of ascorbate which in turn provides reducing equivalents needed to support the activity of intravesicular enzymes. The polypeptide is Transmembrane ascorbate-dependent reductase CYB561 (CYB561) (Bos taurus (Bovine)).